Consider the following 139-residue polypeptide: GSK3B-interacting protein (139 aa).

The disordered stretch occupies residues 1 to 22; sequence METDCNPMELSSMSGFEEGSEL. Residues 41–45 are required for PRKAR2A interaction; contributes to a protective effect against H(2)O(2)-induced apoptosis; sequence VNDVL. Residues 115–139 are interaction with GSK3B and acts as a GSK3B inhibitor; that stretch reads SPAYREAFGNALLQRLEALKRDGQS.

The protein belongs to the GSKIP family. As to quaternary structure, forms a complex composed of PRKAR2A or PRKAR2B, GSK3B and GSKIP through GSKIP interaction; facilitates PKA-induced phosphorylation of GSK3B leading to GSK3B inactivation; recruits DNM1L through GSK3B for PKA-mediated phosphorylation of DNM1L; promotes beta-catenin degradation through GSK3B-induced phosphorylation of beta-catenin; stabilizes beta-catenin and enhances Wnt-induced signaling through PKA-induced phosphorylation of beta-catenin. Interacts with GSK3B; induces GSK3B-mediated phosphorylation of GSKIP and inhibits GSK3B kinase activity. Post-translationally, phosphorylated by GSK3B. Detected in heart, brain, placenta, liver, skeletal muscle, kidney, testis, lung and pancreas.

Its subcellular location is the cytoplasm. The protein localises to the nucleus. In terms of biological role, A-kinase anchoring protein for GSK3B and PKA that regulates or facilitates their kinase activity towards their targets. The ternary complex enhances Wnt-induced signaling by facilitating the GSK3B- and PKA-induced phosphorylation of beta-catenin leading to beta-catenin degradation and stabilization respectively. Upon cAMP activation, the ternary complex contributes to neuroprotection against oxidative stress-induced apoptosis by facilitating the PKA-induced phosphorylation of DML1 and PKA-induced inactivation of GSK3B. During neurite outgrowth promotes neuron proliferation; while increases beta-catenin-induced transcriptional activity through GSK3B kinase activity inhibition, reduces N-cadherin level to promote cell cycle progression. This is GSK3B-interacting protein from Homo sapiens (Human).